The primary structure comprises 286 residues: ATP synthase gamma chain (286 aa).

This sequence belongs to the ATPase gamma chain family. F-type ATPases have 2 components, CF(1) - the catalytic core - and CF(0) - the membrane proton channel. CF(1) has five subunits: alpha(3), beta(3), gamma(1), delta(1), epsilon(1). CF(0) has three main subunits: a, b and c.

It is found in the cell inner membrane. In terms of biological role, produces ATP from ADP in the presence of a proton gradient across the membrane. The gamma chain is believed to be important in regulating ATPase activity and the flow of protons through the CF(0) complex. The polypeptide is ATP synthase gamma chain (Marinomonas sp. (strain MWYL1)).